Consider the following 352-residue polypeptide: Outer membrane protein assembly factor BamC (352 aa).

Positions 1–24 are cleaved as a signal peptide; it reads MAISLQKSTVVKVVGVSLVMLLAA. Residue Cys-25 is the site of N-palmitoyl cysteine attachment. Cys-25 carries the S-diacylglycerol cysteine lipid modification.

The protein belongs to the BamC family. In terms of assembly, part of the Bam complex, which is composed of the outer membrane protein BamA, and four lipoproteins BamB, BamC, BamD and BamE.

The protein resides in the cell outer membrane. In terms of biological role, part of the outer membrane protein assembly complex, which is involved in assembly and insertion of beta-barrel proteins into the outer membrane. In Yersinia pestis, this protein is Outer membrane protein assembly factor BamC.